Reading from the N-terminus, the 200-residue chain is Small ribosomal subunit protein eS8B (200 aa).

The disordered stretch occupies residues 1–41; sequence MGITRDSRHKRSATGAKRAQYRKKRKFELGRQPSNTRIGPK. 2 positions are modified to phosphoserine: Ser62 and Ser99. The interval 124-145 is disordered; the sequence is KGKKATATPTPKSKHVQRKHSA. Basic residues predominate over residues 135–145; that stretch reads KSKHVQRKHSA. Phosphoserine occurs at positions 150, 154, and 171.

Belongs to the eukaryotic ribosomal protein eS8 family. Component of the small ribosomal subunit (SSU). Mature yeast ribosomes consist of a small (40S) and a large (60S) subunit. The 40S small subunit contains 1 molecule of ribosomal RNA (18S rRNA) and at least 33 different proteins. The large 60S subunit contains 3 rRNA molecules (25S, 5.8S and 5S rRNA) and at least 46 different proteins.

It localises to the cytoplasm. Its function is as follows. Component of the ribosome, a large ribonucleoprotein complex responsible for the synthesis of proteins in the cell. The small ribosomal subunit (SSU) binds messenger RNAs (mRNAs) and translates the encoded message by selecting cognate aminoacyl-transfer RNA (tRNA) molecules. The large subunit (LSU) contains the ribosomal catalytic site termed the peptidyl transferase center (PTC), which catalyzes the formation of peptide bonds, thereby polymerizing the amino acids delivered by tRNAs into a polypeptide chain. The nascent polypeptides leave the ribosome through a tunnel in the LSU and interact with protein factors that function in enzymatic processing, targeting, and the membrane insertion of nascent chains at the exit of the ribosomal tunnel. This chain is Small ribosomal subunit protein eS8B (rps802), found in Schizosaccharomyces pombe (strain 972 / ATCC 24843) (Fission yeast).